The following is a 327-amino-acid chain: Probable cell division protein WhiA (327 aa).

Residues serine 275 to lysine 308 constitute a DNA-binding region (H-T-H motif).

It belongs to the WhiA family.

In terms of biological role, involved in cell division and chromosome segregation. This Mycobacterium leprae (strain Br4923) protein is Probable cell division protein WhiA.